Consider the following 160-residue polypeptide: Eukaryotic translation initiation factor 5A-2 (160 aa).

Over residues 1–12 (MSDEEHHFESKA) the composition is skewed to basic and acidic residues. A disordered region spans residues 1–21 (MSDEEHHFESKADAGASKTFP). A Hypusine modification is found at lysine 52.

It belongs to the eIF-5A family. In terms of processing, lys-52 undergoes hypusination, a unique post-translational modification that consists in the addition of a butylamino group from spermidine to lysine side chain, leading to the formation of the unusual amino acid hypusine. eIF-5As are the only known proteins to undergo this modification, which is essential for their function.

Functionally, translation factor that promotes translation elongation and termination, particularly upon ribosome stalling at specific amino acid sequence contexts. Binds between the exit (E) and peptidyl (P) site of the ribosome and promotes rescue of stalled ribosome: specifically required for efficient translation of polyproline-containing peptides as well as other motifs that stall the ribosome. Acts as a ribosome quality control (RQC) cofactor by joining the RQC complex to facilitate peptidyl transfer during CAT tailing step. The protein is Eukaryotic translation initiation factor 5A-2 of Solanum lycopersicum (Tomato).